The primary structure comprises 449 residues: Probable D-serine dehydratase (449 aa).

The residue at position 119 (Lys-119) is an N6-(pyridoxal phosphate)lysine.

It belongs to the serine/threonine dehydratase family. DsdA subfamily. The cofactor is pyridoxal 5'-phosphate.

The catalysed reaction is D-serine = pyruvate + NH4(+). In Pseudomonas putida (strain ATCC 700007 / DSM 6899 / JCM 31910 / BCRC 17059 / LMG 24140 / F1), this protein is Probable D-serine dehydratase.